Consider the following 2167-residue polypeptide: Papilin (2167 aa).

Positions 1–19 are cleaved as a signal peptide; it reads MRLLLFSAALLLCSVPTWA. A TSP type-1 1 domain is found at 76–123; it reads TGNWGPWVPENECSRSCGGGVQLEKRQCSGDCTGASVRYISCNLNACE. 3 cysteine pairs are disulfide-bonded: C88–C117, C92–C122, and C103–C107. N268 is a glycosylation site (N-linked (GlcNAc...) asparagine). 3 consecutive TSP type-1 domains span residues 341–402, 404–459, and 461–525; these read VDYM…VDCE, EWFT…TCNR, and ACPE…GPCE. Cystine bridges form between C353–C396, C357–C401, and C368–C382. 2 N-linked (GlcNAc...) asparagine glycosylation sites follow: N386 and N445. N541, N568, and N638 each carry an N-linked (GlcNAc...) asparagine glycan. 2 consecutive TSP type-1 domains span residues 585-643 and 645-702; these read CEYE…TNEE and CTGT…DDCP. N-linked (GlcNAc...) asparagine glycosylation is found at N715, N729, N741, N814, N820, N857, N933, and N1090. 6 cysteine pairs are disulfide-bonded: C1089/C1141, C1099/C1124, C1116/C1137, C1150/C1202, C1161/C1185, and C1177/C1198. BPTI/Kunitz inhibitor domains are found at residues 1089-1141 and 1150-1202; these read CNQT…ETIC and CYLP…SMFC. The segment at 1239–1273 is disordered; the sequence is QSAEQPQPQQPQQQQQQQQQQPQQPRQSMEDICRS. A compositionally biased stretch (low complexity) spans 1243–1263; that stretch reads QPQPQQPQQQQQQQQQQPQQP. Cystine bridges form between C1271/C1321, C1280/C1304, and C1296/C1317. Residues 1271 to 1321 form the BPTI/Kunitz inhibitor 3 domain; the sequence is CRSRQDAGPCETYSDQWFYNAFSQECETFTYGGCGGNLNRFRSKDECEQRC. The tract at residues 1332 to 1365 is disordered; that stretch reads ARQEQAQPAAQPAQPAQPSNIVSPPQQSASPVVV. 9 disulfide bridges follow: C1375–C1425, C1384–C1408, C1400–C1421, C1447–C1497, C1456–C1480, C1472–C1493, C1504–C1554, C1513–C1537, and C1529–C1550. BPTI/Kunitz inhibitor domains follow at residues 1375 to 1425, 1447 to 1497, and 1504 to 1554; these read CHLN…ESLC, CDEA…KAAC, and CQLP…QARC. The interval 1556 to 1615 is disordered; that stretch reads KDDQTTTTSQPEELPSLPLVQEDPQPRPAFSLKQSFAHSRRRDAPFARSVSARHHTPDSE. Cystine bridges form between C1621–C1671, C1630–C1654, C1646–C1667, C1731–C1781, C1740–C1764, C1756–C1777, C1790–C1840, C1799–C1823, and C1815–C1836. 3 consecutive BPTI/Kunitz inhibitor domains span residues 1621-1671, 1731-1781, and 1790-1840; these read CYAV…ETSC, CMLP…ERAC, and CELP…ESLC. N-linked (GlcNAc...) asparagine glycosylation is present at N1848. 6 disulfide bridges follow: C1853/C1903, C1862/C1886, C1878/C1899, C1914/C1964, C1923/C1947, and C1939/C1960. BPTI/Kunitz inhibitor domains lie at 1853–1903 and 1914–1964; these read CTLE…QQSC and CTLR…FRRC. N1992, N2087, and N2133 each carry an N-linked (GlcNAc...) asparagine glycan. The tract at residues 2075 to 2106 is disordered; that stretch reads RTTSRPMLTPSKNFSLGTPPTPSPSTVSTTPF. Polar residues predominate over residues 2078 to 2090; it reads SRPMLTPSKNFSL. One can recognise a PLAC domain in the interval 2124–2163; it reads TSNSCMDVGNASTCDLIVKNGLCGKKRYGTFCCHTCTRVH.

The protein belongs to the papilin family. Localizes to the basement membranes of the gonad primordium, pharynx and intestine (at protein level). Expressed in head and CAN neurons, coelomocytes, body-wall muscles and anal depressor and sphincter and stomatointestinal muscles. Expressed Isoform a: is expressed in body wall muscles and distal cell tips. Isoform b: expressed in embryonic muscles.

It localises to the secreted. Its subcellular location is the extracellular space. The protein localises to the extracellular matrix. The protein resides in the basement membrane. In terms of biological role, involved in pharynx morphogenesis probably by remodeling the basement membrane. Plays a role in embryogenesis, the second phase of distal cell tip migration and is required for distribution of the metalloproteinase, mig-17, during organogenesis. Functionally, plays a role in post embryonic distal cell tip migration. Essential extracellular matrix (ECM) protein required for hypodermal enclosure in the embryo. This is Papilin (mig-6) from Caenorhabditis elegans.